A 143-amino-acid chain; its full sequence is Large ribosomal subunit protein uL11 (143 aa).

This sequence belongs to the universal ribosomal protein uL11 family. In terms of assembly, part of the ribosomal stalk of the 50S ribosomal subunit. Interacts with L10 and the large rRNA to form the base of the stalk. L10 forms an elongated spine to which L12 dimers bind in a sequential fashion forming a multimeric L10(L12)X complex. One or more lysine residues are methylated.

Its function is as follows. Forms part of the ribosomal stalk which helps the ribosome interact with GTP-bound translation factors. The protein is Large ribosomal subunit protein uL11 of Allorhizobium ampelinum (strain ATCC BAA-846 / DSM 112012 / S4) (Agrobacterium vitis (strain S4)).